A 209-amino-acid polypeptide reads, in one-letter code: Segregation and condensation protein B (209 aa).

This sequence belongs to the ScpB family. Homodimer. Homodimerization may be required to stabilize the binding of ScpA to the Smc head domains. Component of a cohesin-like complex composed of ScpA, ScpB and the Smc homodimer, in which ScpA and ScpB bind to the head domain of Smc. The presence of the three proteins is required for the association of the complex with DNA.

The protein resides in the cytoplasm. Functionally, participates in chromosomal partition during cell division. May act via the formation of a condensin-like complex containing Smc and ScpA that pull DNA away from mid-cell into both cell halves. The polypeptide is Segregation and condensation protein B (Geobacillus thermodenitrificans (strain NG80-2)).